Here is a 296-residue protein sequence, read N- to C-terminus: Small ribosomal subunit protein uS2 (296 aa).

Residues 274 to 284 (ASSAAPADTWA) show a composition bias toward low complexity. The tract at residues 274 to 296 (ASSAAPADTWAGESGNPDAGVKW) is disordered.

Belongs to the universal ribosomal protein uS2 family. In terms of assembly, component of the small ribosomal subunit. Mature ribosomes consist of a small (40S) and a large (60S) subunit. The 40S subunit contains about 33 different proteins and 1 molecule of RNA (18S). The 60S subunit contains about 49 different proteins and 3 molecules of RNA (25S, 5.8S and 5S). Interacts with RPS21.

The protein localises to the cytoplasm. Required for the assembly and/or stability of the 40S ribosomal subunit. Required for the processing of the 20S rRNA-precursor to mature 18S rRNA in a late step of the maturation of 40S ribosomal subunits. This Ajellomyces capsulatus (strain G186AR / H82 / ATCC MYA-2454 / RMSCC 2432) (Darling's disease fungus) protein is Small ribosomal subunit protein uS2.